A 208-amino-acid chain; its full sequence is UPF0637 protein BcerKBAB4_3786 (208 aa).

This sequence belongs to the UPF0637 family.

The sequence is that of UPF0637 protein BcerKBAB4_3786 from Bacillus mycoides (strain KBAB4) (Bacillus weihenstephanensis).